Consider the following 562-residue polypeptide: MSGTILENLSGRKLSILVSSLMLCQVVCFLMGGLFAPVPAGHQTVLGSKCRDVPGRQNDTSFFLYSRGNGACKSLQDIDIEQDELKMANQLVYVFQMPLPRDNNTLQYSRWQQNLIGVLQVDIAYDSASELREPPKELQLTIDTRLAYRNQKDADTDWKLYAHSVEQRYLDCHASHVGRLETLYTCDIIPLFELGALHHNFYLLNLRFPMDTPKQMNLQFGHMHDLTLTAIHQNGGFTQVWLVLKTLLFPFVIGIMMWFWRRVHILQRSPALLEYMLFYLGGALSFLNLPLELLTLGVEMPYMLLLSDVRQGIFYAMLLSFWLVFAGEHMLIQDSPSKSTIRSRYWKHLSAVVVGCISLFVFDICERGVQMRNPFYSIWTTPLGAKVAMSFIVLAGVSAAIYFLFLCFMVWKVFKDIGDKRTSLPSMSQARRLHYEGLIYRFKFLMLATLLCAGLTVAGFIMGQMAEGHWKWNENIEIQLTSAFLTGVYGMWNIYIFALIILYAPSHKQWPTMRHSDETTQSNENIVASAASEEIEFSNLPSDSNPSEISSLTSFTRKVAFD.

Topologically, residues 1–15 (MSGTILENLSGRKLS) are cytoplasmic. A helical transmembrane segment spans residues 16–36 (ILVSSLMLCQVVCFLMGGLFA). At 37–239 (PVPAGHQTVL…AIHQNGGFTQ (203 aa)) the chain is on the lumenal side. 2 N-linked (GlcNAc...) asparagine glycosylation sites follow: N58 and N103. The helical transmembrane segment at 240 to 260 (VWLVLKTLLFPFVIGIMMWFW) threads the bilayer. Residues 261-275 (RRVHILQRSPALLEY) lie on the Cytoplasmic side of the membrane. The helical transmembrane segment at 276 to 296 (MLFYLGGALSFLNLPLELLTL) threads the bilayer. The Lumenal segment spans residues 297-311 (GVEMPYMLLLSDVRQ). Residues 312–332 (GIFYAMLLSFWLVFAGEHMLI) traverse the membrane as a helical segment. Residues 333–344 (QDSPSKSTIRSR) lie on the Cytoplasmic side of the membrane. A helical membrane pass occupies residues 345–365 (YWKHLSAVVVGCISLFVFDIC). Topologically, residues 366–390 (ERGVQMRNPFYSIWTTPLGAKVAMS) are lumenal. Residues 391–411 (FIVLAGVSAAIYFLFLCFMVW) form a helical membrane-spanning segment. Residues 412–441 (KVFKDIGDKRTSLPSMSQARRLHYEGLIYR) lie on the Cytoplasmic side of the membrane. Residues 442–462 (FKFLMLATLLCAGLTVAGFIM) traverse the membrane as a helical segment. Topologically, residues 463 to 482 (GQMAEGHWKWNENIEIQLTS) are lumenal. The helical transmembrane segment at 483–503 (AFLTGVYGMWNIYIFALIILY) threads the bilayer. Residues 504–562 (APSHKQWPTMRHSDETTQSNENIVASAASEEIEFSNLPSDSNPSEISSLTSFTRKVAFD) lie on the Cytoplasmic side of the membrane.

It belongs to the wntless family. In terms of assembly, interacts with wg; in the Golgi. Interacts with Vps35, a component of the retromer complex; wls stability is regulated by Vps35.

Its subcellular location is the presynaptic cell membrane. It localises to the postsynaptic cell membrane. The protein localises to the cell membrane. The protein resides in the endoplasmic reticulum membrane. It is found in the endosome membrane. Its subcellular location is the golgi apparatus membrane. Its function is as follows. A segment polarity gene required for wingless (wg)-dependent patterning processes, acting in both wg-sending cells and wg-target cells. In non-neuronal cells wls directs wg secretion. The wls traffic loop encompasses the Golgi, the cell surface, an endocytic compartment and a retrograde route leading back to the Golgi, and involves clathrin-mediated endocytosis and the retromer complex (a conserved protein complex consisting of Vps35 and Vps26). In neuronal cells (the larval motorneuron NMJ), the wg signal moves across the synapse via the release of wls-containing exosome-like vesicles. Postsynaptic wls is required for the trafficking of fz2 through the fz2-interacting protein Grip. This chain is Protein wntless, found in Drosophila grimshawi (Hawaiian fruit fly).